Reading from the N-terminus, the 626-residue chain is UvrABC system protein C (626 aa).

Residues 26–105 (PEPGVYFMRD…IKQHQPHFNV (80 aa)) form the GIY-YIG domain. The region spanning 215–250 (SELINTLSLQMEQAAEDLNFEQAARLRDQIKGLQGL) is the UVR domain.

Belongs to the UvrC family. Interacts with UvrB in an incision complex.

It is found in the cytoplasm. Its function is as follows. The UvrABC repair system catalyzes the recognition and processing of DNA lesions. UvrC both incises the 5' and 3' sides of the lesion. The N-terminal half is responsible for the 3' incision and the C-terminal half is responsible for the 5' incision. The protein is UvrABC system protein C of Acaryochloris marina (strain MBIC 11017).